The chain runs to 367 residues: 2-oxoisovalerate dehydrogenase subunit alpha (367 aa).

Substrate contacts are provided by residues Phe66, Tyr95, Met128–His131, and Ser144. Residue Tyr94–Arg96 participates in thiamine diphosphate binding. Residues Ser144–Ile146, Gly174–Glu180, Asn204–Ile208, and His273 each bind thiamine diphosphate. Residues Asp175, Asn204, and Tyr206 each contribute to the Mg(2+) site.

Belongs to the BCKDHA family. In terms of assembly, heterotetramer of two alpha and two beta chains. Directly associated with ODBB in the E1 complex. The cofactor is thiamine diphosphate.

The enzyme catalyses N(6)-[(R)-lipoyl]-L-lysyl-[protein] + 3-methyl-2-oxobutanoate + H(+) = N(6)-[(R)-S(8)-2-methylpropanoyldihydrolipoyl]-L-lysyl-[protein] + CO2. The branched-chain alpha-keto dehydrogenase complex catalyzes the overall conversion of alpha-keto acids to acyl-CoA and CO(2). It contains multiple copies of three enzymatic components: branched-chain alpha-keto acid decarboxylase (E1), lipoamide acyltransferase (E2) and lipoamide dehydrogenase (E3). This Thermus thermophilus (strain ATCC BAA-163 / DSM 7039 / HB27) protein is 2-oxoisovalerate dehydrogenase subunit alpha.